A 231-amino-acid polypeptide reads, in one-letter code: dTTP/UTP pyrophosphatase (231 aa).

The Proton acceptor role is filled by D81.

This sequence belongs to the Maf family. YhdE subfamily. A divalent metal cation is required as a cofactor.

It is found in the cytoplasm. It catalyses the reaction dTTP + H2O = dTMP + diphosphate + H(+). It carries out the reaction UTP + H2O = UMP + diphosphate + H(+). Nucleoside triphosphate pyrophosphatase that hydrolyzes dTTP and UTP. May have a dual role in cell division arrest and in preventing the incorporation of modified nucleotides into cellular nucleic acids. The chain is dTTP/UTP pyrophosphatase from Lawsonia intracellularis (strain PHE/MN1-00).